Here is a 493-residue protein sequence, read N- to C-terminus: Phospholipid transfer protein (493 aa).

Positions 1–17 (MVLLWALFLALLAGAHA) are cleaved as a signal peptide. Residues Asn64, Asn91, Asn94, Asn117, and Asn143 are each glycosylated (N-linked (GlcNAc...) asparagine). Cys146 and Cys185 are oxidised to a cystine. Asn245 and Asn398 each carry an N-linked (GlcNAc...) asparagine glycan.

This sequence belongs to the BPI/LBP/Plunc superfamily. BPI/LBP family. In terms of processing, glycosylation is necessary for secretion and its phospholipid transfer activity. As to expression, highest level expression in the lung, brain and heart with relatively low levels in the liver, skeletal muscle and testis and very low levels found in the spleen and kidney.

Its subcellular location is the secreted. It localises to the nucleus. It carries out the reaction a 1,2-diacyl-sn-glycero-3-phosphocholine(in) = a 1,2-diacyl-sn-glycero-3-phosphocholine(out). The enzyme catalyses a 1,2-diacyl-sn-glycero-3-phosphoethanolamine(in) = a 1,2-diacyl-sn-glycero-3-phosphoethanolamine(out). The catalysed reaction is a 1,2-diacyl-sn-glycerol(in) = a 1,2-diacyl-sn-glycerol(out). It catalyses the reaction a 1,2-diacyl-sn-glycero-3-phosphate(in) = a 1,2-diacyl-sn-glycero-3-phosphate(out). It carries out the reaction a sphingomyelin(in) = a sphingomyelin(out). The enzyme catalyses a 1,2-diacyl-sn-glycero-3-phospho-(1'-sn-glycerol)(in) = a 1,2-diacyl-sn-glycero-3-phospho-(1'-sn-glycerol)(out). The catalysed reaction is a 1,2-diacyl-sn-glycero-3-phospho-(1D-myo-inositol)(in) = a 1,2-diacyl-sn-glycero-3-phospho-(1D-myo-inositol)(out). It catalyses the reaction 1-hexadecanoyl-2-(5Z,8Z,11Z,14Z-eicosatetraenoyl)-sn-glycero-3-phosphoethanolamine(in) = 1-hexadecanoyl-2-(5Z,8Z,11Z,14Z-eicosatetraenoyl)-sn-glycero-3-phosphoethanolamine(out). It carries out the reaction N-(hexadecanoyl)-sphing-4-enine-1-phosphocholine(in) = N-(hexadecanoyl)-sphing-4-enine-1-phosphocholine(out). The enzyme catalyses 1,2-dihexadecanoyl-sn-glycero-3-phosphocholine(in) = 1,2-dihexadecanoyl-sn-glycero-3-phosphocholine(out). In terms of biological role, mediates the transfer of phospholipids and free cholesterol from triglyceride-rich lipoproteins (low density lipoproteins or LDL and very low density lipoproteins or VLDL) into high-density lipoproteins (HDL) as well as the exchange of phospholipids between triglyceride-rich lipoproteins themselves. Facilitates the transfer of a spectrum of different lipid molecules, including sphingomyelin, phosphatidylcholine, phosphatidylinositol, phosphatidylglycerol, and phosphatidyl ethanolamine. Plays an important role in HDL remodeling which involves modulating the size and composition of HDL. Also plays a key role in the uptake of cholesterol from peripheral cells and tissues that is subsequently transported to the liver for degradation and excretion. Two distinct forms of PLTP exist in plasma: an active form that can transfer phosphatidylcholine from phospholipid vesicles to HDL, and an inactive form that lacks this capability. The protein is Phospholipid transfer protein (Pltp) of Mus musculus (Mouse).